Consider the following 159-residue polypeptide: ATP synthase subunit b (159 aa).

Residues 2–22 (NISIPQIIAAILNFIILLLIV) form a helical membrane-spanning segment.

Belongs to the ATPase B chain family. As to quaternary structure, F-type ATPases have 2 components, F(1) - the catalytic core - and F(0) - the membrane proton channel. F(1) has five subunits: alpha(3), beta(3), gamma(1), delta(1), epsilon(1). F(0) has three main subunits: a(1), b(2) and c(10-14). The alpha and beta chains form an alternating ring which encloses part of the gamma chain. F(1) is attached to F(0) by a central stalk formed by the gamma and epsilon chains, while a peripheral stalk is formed by the delta and b chains.

It localises to the cell membrane. Its function is as follows. F(1)F(0) ATP synthase produces ATP from ADP in the presence of a proton or sodium gradient. F-type ATPases consist of two structural domains, F(1) containing the extramembraneous catalytic core and F(0) containing the membrane proton channel, linked together by a central stalk and a peripheral stalk. During catalysis, ATP synthesis in the catalytic domain of F(1) is coupled via a rotary mechanism of the central stalk subunits to proton translocation. Component of the F(0) channel, it forms part of the peripheral stalk, linking F(1) to F(0). In Clostridium botulinum (strain Okra / Type B1), this protein is ATP synthase subunit b.